A 333-amino-acid chain; its full sequence is MANIYYDDSCDLNLLKGKTIAVIGYGSQGHAQAQNMKDSGLKVIIGLRDGSKSVKEAKEAGFEVYNVAEASKKADIIQILAPDTIQADMYKADIEPNLSEGKALVFSHGFNIHYDLITPPKNVDVYMVAPKGPGHLVRRVYTEGGGVPCLIAIYQDATGQAKARALAHASGVGGGRAGILETSFREETETDLFGEQAVLCGGVANLIMSGFETLTEAGYDPEIAYFECLHEVKLITDLIYEGGLARMRFSISDTAEYGDYISGPRVIDAGVKARMKDVLTDIQKDKGAAFAKRWMADTKAGYPEYKKLKEKNAAHPIEAVGTKLRSMMKWLAK.

Residues 2-182 (ANIYYDDSCD…GGGRAGILET (181 aa)) form the KARI N-terminal Rossmann domain. Residues 25–28 (YGSQ), Arg48, Ser51, Ser53, and 83–86 (DTIQ) each bind NADP(+). Residue His108 is part of the active site. NADP(+) is bound at residue Gly134. Residues 183–331 (SFREETETDL…TKLRSMMKWL (149 aa)) form the KARI C-terminal knotted domain. Mg(2+) contacts are provided by Asp191, Glu195, Glu227, and Glu231. Substrate is bound at residue Ser252.

Belongs to the ketol-acid reductoisomerase family. Requires Mg(2+) as cofactor.

It catalyses the reaction (2R)-2,3-dihydroxy-3-methylbutanoate + NADP(+) = (2S)-2-acetolactate + NADPH + H(+). It carries out the reaction (2R,3R)-2,3-dihydroxy-3-methylpentanoate + NADP(+) = (S)-2-ethyl-2-hydroxy-3-oxobutanoate + NADPH + H(+). The protein operates within amino-acid biosynthesis; L-isoleucine biosynthesis; L-isoleucine from 2-oxobutanoate: step 2/4. It participates in amino-acid biosynthesis; L-valine biosynthesis; L-valine from pyruvate: step 2/4. Its function is as follows. Involved in the biosynthesis of branched-chain amino acids (BCAA). Catalyzes an alkyl-migration followed by a ketol-acid reduction of (S)-2-acetolactate (S2AL) to yield (R)-2,3-dihydroxy-isovalerate. In the isomerase reaction, S2AL is rearranged via a Mg-dependent methyl migration to produce 3-hydroxy-3-methyl-2-ketobutyrate (HMKB). In the reductase reaction, this 2-ketoacid undergoes a metal-dependent reduction by NADPH to yield (R)-2,3-dihydroxy-isovalerate. The polypeptide is Ketol-acid reductoisomerase (NADP(+)) (Leptospira biflexa serovar Patoc (strain Patoc 1 / Ames)).